The following is a 636-amino-acid chain: Probable potassium transport system protein Kup (636 aa).

Helical transmembrane passes span 22–42, 64–84, 114–134, 150–170, 182–202, 220–240, 261–281, 293–313, 351–371, 383–403, 408–428, and 433–453; these read MGLL…SPLY, ILSL…VMFI, ALMV…SMIT, FEGI…ALFL, LFGP…VHGI, FFIV…LALT, WFAL…AILL, LLAP…ATVI, IYIG…VIGF, VAVT…MLLL, PVLA…FFAA, and IVQG…LMST.

The protein belongs to the HAK/KUP transporter (TC 2.A.72) family.

It localises to the cell inner membrane. The catalysed reaction is K(+)(in) + H(+)(in) = K(+)(out) + H(+)(out). Functionally, transport of potassium into the cell. Likely operates as a K(+):H(+) symporter. In Pseudomonas entomophila (strain L48), this protein is Probable potassium transport system protein Kup.